A 422-amino-acid chain; its full sequence is Glucosylglycerol-phosphate phosphatase (422 aa).

Catalysis depends on Asp403, which acts as the Proton donor.

This sequence belongs to the histidine acid phosphatase family. Monomer. Interacts with GGPS.

It catalyses the reaction 2-O-(alpha-D-glucopyranosyl)-sn-glycerol 3-phosphate + H2O = 2-O-(alpha-D-glucopyranosyl)glycerol + phosphate. In terms of biological role, phosphorylates glucosylglycerol-phosphate the precursor of the osmoprotectant glucosylglycerol necessary for salt adaptation of Synechocystis. The polypeptide is Glucosylglycerol-phosphate phosphatase (stpA) (Synechocystis sp. (strain ATCC 27184 / PCC 6803 / Kazusa)).